Reading from the N-terminus, the 245-residue chain is Probable octanoyltransferase 2 (245 aa).

The BPL/LPL catalytic domain maps to 38-227 (MEYKPVLYFQ…SIEKEFDIKE (190 aa)). Substrate is bound by residues 89-96 (RGGYETYH), 157-159 (SIG), and 170-172 (GMA). The Acyl-thioester intermediate role is filled by Cys188.

It belongs to the LipB family.

It localises to the cytoplasm. It carries out the reaction octanoyl-[ACP] + L-lysyl-[protein] = N(6)-octanoyl-L-lysyl-[protein] + holo-[ACP] + H(+). The protein operates within protein modification; protein lipoylation via endogenous pathway; protein N(6)-(lipoyl)lysine from octanoyl-[acyl-carrier-protein]: step 1/2. Its function is as follows. Catalyzes the transfer of endogenously produced octanoic acid from octanoyl-acyl-carrier-protein onto the lipoyl domains of lipoate-dependent enzymes. Lipoyl-ACP can also act as a substrate although octanoyl-ACP is likely to be the physiological substrate. The sequence is that of Probable octanoyltransferase 2 from Picrophilus torridus (strain ATCC 700027 / DSM 9790 / JCM 10055 / NBRC 100828 / KAW 2/3).